The following is a 370-amino-acid chain: UDP-N-acetylglucosamine--N-acetylmuramyl-(pentapeptide) pyrophosphoryl-undecaprenol N-acetylglucosamine transferase (370 aa).

UDP-N-acetyl-alpha-D-glucosamine contacts are provided by residues Thr10–Gly12, Asn124, Ser196, Ile253, and Gln298.

The protein belongs to the glycosyltransferase 28 family. MurG subfamily.

Its subcellular location is the cell membrane. It carries out the reaction Mur2Ac(oyl-L-Ala-gamma-D-Glu-L-Lys-D-Ala-D-Ala)-di-trans,octa-cis-undecaprenyl diphosphate + UDP-N-acetyl-alpha-D-glucosamine = beta-D-GlcNAc-(1-&gt;4)-Mur2Ac(oyl-L-Ala-gamma-D-Glu-L-Lys-D-Ala-D-Ala)-di-trans,octa-cis-undecaprenyl diphosphate + UDP + H(+). Its pathway is cell wall biogenesis; peptidoglycan biosynthesis. Cell wall formation. Catalyzes the transfer of a GlcNAc subunit on undecaprenyl-pyrophosphoryl-MurNAc-pentapeptide (lipid intermediate I) to form undecaprenyl-pyrophosphoryl-MurNAc-(pentapeptide)GlcNAc (lipid intermediate II). The protein is UDP-N-acetylglucosamine--N-acetylmuramyl-(pentapeptide) pyrophosphoryl-undecaprenol N-acetylglucosamine transferase of Limosilactobacillus reuteri subsp. reuteri (strain JCM 1112) (Lactobacillus reuteri).